The sequence spans 316 residues: Porphobilinogen deaminase (316 aa).

Position 245 is an S-(dipyrrolylmethanemethyl)cysteine (Cys245).

Belongs to the HMBS family. Monomer. Requires dipyrromethane as cofactor.

It carries out the reaction 4 porphobilinogen + H2O = hydroxymethylbilane + 4 NH4(+). The protein operates within porphyrin-containing compound metabolism; protoporphyrin-IX biosynthesis; coproporphyrinogen-III from 5-aminolevulinate: step 2/4. It functions in the pathway porphyrin-containing compound metabolism; chlorophyll biosynthesis. Functionally, tetrapolymerization of the monopyrrole PBG into the hydroxymethylbilane pre-uroporphyrinogen in several discrete steps. The protein is Porphobilinogen deaminase of Prochlorococcus marinus (strain MIT 9312).